A 1250-amino-acid polypeptide reads, in one-letter code: Protein suppressor of variegation 3-7 (1250 aa).

Disordered regions lie at residues 107–148 and 160–186; these read LNNP…HSYH and HDPG…GGMR. Over residues 132 to 141 the composition is skewed to polar residues; that stretch reads STKTEPSSDA. Over residues 164–175 the composition is skewed to acidic residues; the sequence is DSQDDDDEDDES. 3 positions are modified to phosphoserine: serine 165, serine 175, and serine 176. 4 consecutive C2H2-type zinc fingers follow at residues 217 to 236, 319 to 343, 425 to 446, and 487 to 512; these read CLYC…IQQH, CRIC…TKGH, CTLC…TRAH, and CSVC…SEKH. Residues 343–354 show a composition bias toward basic and acidic residues; sequence HMEALRNLDSDK. The tract at residues 343-398 is disordered; that stretch reads HMEALRNLDSDKRSRKRKRSKSNSVTNSGGDEAEREKESEPEVGPEDAQDTPVVMM. The segment at 525–564 is disordered; it reads VGSADGRGGDNMDEEEAAASDQAQSSQTDDSEDNDDDNWS. The segment covering 543–552 has biased composition (low complexity); it reads ASDQAQSSQT. A compositionally biased stretch (acidic residues) spans 553–563; it reads DDSEDNDDDNW. The C2H2-type 5 zinc-finger motif lies at 605–629; it reads QICKFCRVRFHNEAAKARHELSARH. The disordered stretch occupies residues 642-684; it reads KLHQGTNTQTKHNAQDDEESQEQDEEYGEEEEDAEEDSQSNFD. The segment covering 657–679 has biased composition (acidic residues); sequence DDEESQEQDEEYGEEEEDAEEDS. C2H2-type zinc fingers lie at residues 737-761 and 829-852; these read CKLC…TSRH and CRVC…SRKH. Positions 851–860 are enriched in basic and acidic residues; the sequence is KHVENKERQR. The disordered stretch occupies residues 851–915; the sequence is KHVENKERQR…PLAKRSRRSM (65 aa). Residues serine 871 and serine 873 each carry the phosphoserine modification. Basic and acidic residues predominate over residues 879–897; sequence DAERQESGMDKESENDMSV. Serine 975 carries the phosphoserine modification. The region spanning 987 to 1026 is the BESS domain; it reads RHVMDLFFDSISPTMKSLPPDLAAEGKSKIMQLVCSLELR. The span at 1032 to 1055 shows a compositional bias: low complexity; the sequence is ATTPTPATVSASSKWPSSTTVTPV. 4 disordered regions span residues 1032 to 1060, 1079 to 1116, 1154 to 1180, and 1205 to 1236; these read ATTP…TPPA, TTPH…NGSA, QSRT…ADLS, and NTPQ…NGCQ. Polar residues-rich tracts occupy residues 1079 to 1091 and 1104 to 1114; these read TTPH…QNNN and GASSAQVTING. The span at 1206–1224 shows a compositional bias: low complexity; that stretch reads TPQMQQPQQAQASITSSTP.

In terms of assembly, interacts with Su(var)39 through the BESS domain.

The protein localises to the nucleus. Its function is as follows. Dose-limiting factor in position-effect variegation, the inactivation in some cells of a gene translocated next to heterochromatin. It could play a role in chromosome condensation. The sequence is that of Protein suppressor of variegation 3-7 (Su(var)3-7) from Drosophila melanogaster (Fruit fly).